Reading from the N-terminus, the 183-residue chain is Protein jagunal homolog 1 (183 aa).

The Cytoplasmic portion of the chain corresponds to Met1 to Lys39. Phosphoserine is present on Ser3. A helical membrane pass occupies residues Leu40–Leu60. Residues Arg61–Pro71 lie on the Lumenal side of the membrane. Residues Tyr72–Phe92 form a helical membrane-spanning segment. Topologically, residues Pro93 to Asn96 are cytoplasmic. Residues Ile97–Tyr117 form a helical membrane-spanning segment. The Lumenal segment spans residues Gly118–Arg137. A helical transmembrane segment spans residues Phe138–Val158. The Cytoplasmic portion of the chain corresponds to His159 to Lys183.

The protein belongs to the jagunal family. In terms of assembly, interacts with COPA, COPB2 and COPG2.

The protein localises to the endoplasmic reticulum membrane. Its function is as follows. Endoplasmic reticulum transmembrane protein involved in vesicle-mediated transport, which is required for neutrophil function. Required for vesicle-mediated transport; it is however unclear whether it is involved in early secretory pathway or intracellular protein transport. Acts as a regulator of neutrophil function, probably via its role in vesicle-mediated transport: required for defense against fungal pathogens and for granulocyte colony-stimulating factor (GM-CSF) signaling pathway; possibly by regulating glycosylation and/or targeting of proteins contributing to the viability and migration of neutrophils. The chain is Protein jagunal homolog 1 (JAGN1) from Bos taurus (Bovine).